The primary structure comprises 164 residues: MRCPKCNYNKSSVVDSRQAEDGNTIRRRRECEKCHTRFTTFERLEELPLLVVKKDGTREQFSRDKILNGVVQSAQKRPVSSTDIENLISRIEQKVRANYENEVSSTAIGNLVMEELAELDEITYVRFASVYKSFKDVDEIEALLQQITNRVRGKKKSSIDDETH.

A zinc finger spans residues 3-34 (CPKCNYNKSSVVDSRQAEDGNTIRRRRECEKC). The region spanning 49–139 (LLVVKKDGTR…VYKSFKDVDE (91 aa)) is the ATP-cone domain.

Belongs to the NrdR family. Requires Zn(2+) as cofactor.

In terms of biological role, negatively regulates transcription of bacterial ribonucleotide reductase nrd genes and operons by binding to NrdR-boxes. The chain is Transcriptional repressor NrdR from Streptococcus uberis (strain ATCC BAA-854 / 0140J).